A 170-amino-acid polypeptide reads, in one-letter code: MGFPVGYTEVFLPKLFVQTLSILGFIRTIVFSIFRFLGLSDFLEMDQTWPDYTSYPTRIPETRSPFSALLIREILPVIKFEELTNSGEDLPENCAVCLYEFEGEQEIRWLRNCRHIFHRSCLDRWMDHDQKTCPLCRTPFVPDEMQEEFNQRLWAASGVHDFHCPVTELL.

Residues 15–37 (LFVQTLSILGFIRTIVFSIFRFL) form a helical membrane-spanning segment. Residues 94-137 (CAVCLYEFEGEQEIRWLRNCRHIFHRSCLDRWMDHDQKTCPLCR) form an RING-type; atypical zinc finger.

The protein belongs to the RING-type zinc finger family. As to expression, highly expressed in stems, rosette leaves and siliques, and moderately expressed in roots, cauline leaves and flower. Detected at low levels in seeds.

Its subcellular location is the membrane. Functionally, may be involved in the brassinosteroids (BRs) signaling pathway and regulate the growth and development of rosette leaves. Seems to prevent over development of leaves and inflorescence stems. This chain is Brassinosteroid-responsive RING protein 1, found in Arabidopsis thaliana (Mouse-ear cress).